A 399-amino-acid polypeptide reads, in one-letter code: Acetate kinase (399 aa).

Mg(2+) is bound at residue asparagine 10. Lysine 17 contributes to the ATP binding site. Residue arginine 91 participates in substrate binding. Catalysis depends on aspartate 148, which acts as the Proton donor/acceptor. Residues 208–212 (HLGNG), 283–285 (DCR), and 331–335 (GIGEN) each bind ATP. Glutamate 385 contributes to the Mg(2+) binding site.

The protein belongs to the acetokinase family. In terms of assembly, homodimer. Mg(2+) serves as cofactor. Requires Mn(2+) as cofactor.

The protein localises to the cytoplasm. It carries out the reaction acetate + ATP = acetyl phosphate + ADP. It participates in metabolic intermediate biosynthesis; acetyl-CoA biosynthesis; acetyl-CoA from acetate: step 1/2. In terms of biological role, catalyzes the formation of acetyl phosphate from acetate and ATP. Can also catalyze the reverse reaction. The polypeptide is Acetate kinase (Shewanella sp. (strain MR-4)).